A 431-amino-acid chain; its full sequence is Serine/threonine-protein kinase Sgk1 (431 aa).

Residues M1–I60 are necessary for localization to the mitochondria. The tract at residues Q64–H92 is disordered. Residue S74 is modified to Phosphoserine. Position 78 is a phosphoserine; by MAPK7 (S78). Positions Q81–P91 are enriched in polar residues. Residues F98–F355 enclose the Protein kinase domain. ATP-binding positions include I104–V112 and K127. Positions K131–K141 match the Nuclear localization signal motif. Residue D222 is the Proton acceptor of the active site. Residue T256 is modified to Phosphothreonine; by PDPK1. One can recognise an AGC-kinase C-terminal domain in the interval S356 to L431. T369 bears the Phosphothreonine; by PKA mark. Phosphoserine is present on residues S397, S401, and S422.

It belongs to the protein kinase superfamily. AGC Ser/Thr protein kinase family. Homodimer; disulfide-linked. Forms a trimeric complex with FBXW7 and NOTCH1. Interacts with MAPK3/ERK1, MAPK1/ERK2, MAP2K1/MEK1, MAP2K2/MEK2, NEDD4, NEDD4L, MAPT/TAU, MAPK7, CREB1, SLC9A3R2/NHERF2 and KCNJ1/ROMK1. Associates with the mammalian target of rapamycin complex 2 (mTORC2) via an interaction with MAPKAP1/SIN1. Regulated by phosphorylation. Activated by phosphorylation on Ser-422 by mTORC2, transforming it into a substrate for PDPK1 which phosphorylates it on Thr-256. Phosphorylation on Ser-397 and Ser-401 are also essential for its activity. Phosphorylation on Ser-78 by MAPK7 is required for growth factor-induced cell cycle progression. Post-translationally, ubiquitinated by NEDD4L; which promotes proteasomal degradation. Ubiquitinated by SYVN1 at the endoplasmic reticulum; which promotes rapid proteasomal degradation and maintains a high turnover rate in resting cells.

The protein localises to the cytoplasm. It is found in the nucleus. It localises to the endoplasmic reticulum membrane. Its subcellular location is the cell membrane. The protein resides in the mitochondrion. The enzyme catalyses L-seryl-[protein] + ATP = O-phospho-L-seryl-[protein] + ADP + H(+). It catalyses the reaction L-threonyl-[protein] + ATP = O-phospho-L-threonyl-[protein] + ADP + H(+). Its activity is regulated as follows. Two specific sites, one in the kinase domain (Thr-256) and the other in the C-terminal regulatory region (Ser-422), need to be phosphorylated for its full activation. Phosphorylation at Ser-397 and Ser-401 are also essential for its activity. Activated by WNK1, WNK2, WNK3 and WNK4; which promote phosphorylation by mTORC2. Its function is as follows. Serine/threonine-protein kinase which is involved in the regulation of a wide variety of ion channels, membrane transporters, cellular enzymes, transcription factors, neuronal excitability, cell growth, proliferation, survival, migration and apoptosis. Plays an important role in cellular stress response. Contributes to regulation of renal Na(+) retention, renal K(+) elimination, salt appetite, gastric acid secretion, intestinal Na(+)/H(+) exchange and nutrient transport, insulin-dependent salt sensitivity of blood pressure, salt sensitivity of peripheral glucose uptake, cardiac repolarization and memory consolidation. Up-regulates Na(+) channels: SCNN1A/ENAC, SCN5A and ASIC1/ACCN2, K(+) channels: KCNJ1/ROMK1, KCNA1-5, KCNQ1-5 and KCNE1, epithelial Ca(2+) channels: TRPV5 and TRPV6, chloride channels: BSND, CLCN2 and CFTR, glutamate transporters: SLC1A3/EAAT1, SLC1A2 /EAAT2, SLC1A1/EAAT3, SLC1A6/EAAT4 and SLC1A7/EAAT5, amino acid transporters: SLC1A5/ASCT2, SLC38A1/SN1 and SLC6A19, creatine transporter: SLC6A8, Na(+)/dicarboxylate cotransporter: SLC13A2/NADC1, Na(+)-dependent phosphate cotransporter: SLC34A2/NAPI-2B, glutamate receptor: GRIK2/GLUR6. Up-regulates carriers: SLC9A3/NHE3, SLC12A1/NKCC2, SLC12A3/NCC, SLC5A3/SMIT, SLC2A1/GLUT1, SLC5A1/SGLT1 and SLC15A2/PEPT2. Regulates enzymes: GSK3A/B, PMM2 and Na(+)/K(+) ATPase, and transcription factors: CTNNB1 and nuclear factor NF-kappa-B. Stimulates sodium transport into epithelial cells by enhancing the stability and expression of SCNN1A/ENAC. This is achieved by phosphorylating the NEDD4L ubiquitin E3 ligase, promoting its interaction with 14-3-3 proteins, thereby preventing it from binding to SCNN1A/ENAC and targeting it for degradation. Regulates store-operated Ca(+2) entry (SOCE) by stimulating ORAI1 and STIM1. Regulates KCNJ1/ROMK1 directly via its phosphorylation or indirectly via increased interaction with SLC9A3R2/NHERF2. Phosphorylates MDM2 and activates MDM2-dependent ubiquitination of p53/TP53. Phosphorylates MAPT/TAU and mediates microtubule depolymerization and neurite formation in hippocampal neurons. Phosphorylates SLC2A4/GLUT4 and up-regulates its activity. Phosphorylates APBB1/FE65 and promotes its localization to the nucleus. Phosphorylates MAPK1/ERK2 and activates it by enhancing its interaction with MAP2K1/MEK1 and MAP2K2/MEK2. Phosphorylates FBXW7 and plays an inhibitory role in the NOTCH1 signaling. Phosphorylates FOXO1 resulting in its relocalization from the nucleus to the cytoplasm. Phosphorylates FOXO3, promoting its exit from the nucleus and interference with FOXO3-dependent transcription. Phosphorylates BRAF and MAP3K3/MEKK3 and inhibits their activity. Phosphorylates SLC9A3/NHE3 in response to dexamethasone, resulting in its activation and increased localization at the cell membrane. Phosphorylates CREB1. Necessary for vascular remodeling during angiogenesis. The protein is Serine/threonine-protein kinase Sgk1 (SGK1) of Bos taurus (Bovine).